A 270-amino-acid polypeptide reads, in one-letter code: MDWKTLQALLSGVNKYSTAFGRIWLSVVFVFRVLVYVVAAERVWGDEQKDFDCNTKQPGCTNVCYDNYFPISNIRLWALQLIFVTCPSLLVILHVAYREERERRHRQKHGDQCAKLYDNAGKKHGGLWWTYLFSLIFKLIIEFLFLYLLHTLWHGFNMPRLVQCANVAPCPNIVDCYIARPTEKKIFTYFMVGASAVCIVLTICELCYLICHRVLRGLHKDKPRGGCSPSSSASRASTCRCHHKLVEAGEVDPDPGNNKLQASAPNLTPI.

At 1 to 20 (MDWKTLQALLSGVNKYSTAF) the chain is on the cytoplasmic side. The chain crosses the membrane as a helical span at residues 21 to 40 (GRIWLSVVFVFRVLVYVVAA). Topologically, residues 41–75 (ERVWGDEQKDFDCNTKQPGCTNVCYDNYFPISNIR) are extracellular. The helical transmembrane segment at 76 to 98 (LWALQLIFVTCPSLLVILHVAYR) threads the bilayer. Residues 99 to 126 (EERERRHRQKHGDQCAKLYDNAGKKHGG) are Cytoplasmic-facing. Residues 127 to 149 (LWWTYLFSLIFKLIIEFLFLYLL) traverse the membrane as a helical segment. The Extracellular portion of the chain corresponds to 150 to 187 (HTLWHGFNMPRLVQCANVAPCPNIVDCYIARPTEKKIF). The helical transmembrane segment at 188–210 (TYFMVGASAVCIVLTICELCYLI) threads the bilayer. Over 211-270 (CHRVLRGLHKDKPRGGCSPSSSASRASTCRCHHKLVEAGEVDPDPGNNKLQASAPNLTPI) the chain is Cytoplasmic. A disordered region spans residues 250–270 (EVDPDPGNNKLQASAPNLTPI). Positions 258-270 (NKLQASAPNLTPI) are enriched in polar residues.

It belongs to the connexin family. Beta-type (group I) subfamily. A connexon is composed of a hexamer of connexins. Interacts with CNST.

The protein resides in the cell membrane. The protein localises to the cell junction. It localises to the gap junction. One gap junction consists of a cluster of closely packed pairs of transmembrane channels, the connexons, through which materials of low MW diffuse from one cell to a neighboring cell. The protein is Gap junction beta-3 protein (GJB3) of Homo sapiens (Human).